We begin with the raw amino-acid sequence, 333 residues long: MKTIFFGTPEVAVPYLEILNRYTEVVLVVTQPDRPRGRGMVITPCPVKETALKMGLKVLSPEKITDIEADLKAAGADYGIAVAYGQILKQHIIDIPKLGIVNIHFSLLPKFRGAAPVQHTLFAGETKTGVTAFWIDKGMDTGPVFAYKETDILPSEDAKTLFTKLISLGGILLEDVIEYIRLGQIVKIPQTKNIFTPQEDGSMFKEELPLPTYAPMIKKEDTILDFNNFGAETFFNRVRGLACGPHAKVITKINGKEDLLQIIKASLLEKNKQCPPNMPRGSVVSIENDGRILVKCYDSCIYIDIVRPAGKKDMTAASFANGHKIKPGDVIFY.

Position 106–109 (106–109 (SLLP)) interacts with (6S)-5,6,7,8-tetrahydrofolate.

This sequence belongs to the Fmt family.

It carries out the reaction L-methionyl-tRNA(fMet) + (6R)-10-formyltetrahydrofolate = N-formyl-L-methionyl-tRNA(fMet) + (6S)-5,6,7,8-tetrahydrofolate + H(+). Its function is as follows. Attaches a formyl group to the free amino group of methionyl-tRNA(fMet). The formyl group appears to play a dual role in the initiator identity of N-formylmethionyl-tRNA by promoting its recognition by IF2 and preventing the misappropriation of this tRNA by the elongation apparatus. The sequence is that of Methionyl-tRNA formyltransferase from Elusimicrobium minutum (strain Pei191).